Reading from the N-terminus, the 279-residue chain is Shikimate dehydrogenase (NADP(+)) (279 aa).

Shikimate is bound by residues 21-23 (SMS) and Thr-68. Residue Lys-72 is the Proton acceptor of the active site. Residues Asn-93 and Asp-108 each coordinate shikimate. NADP(+) contacts are provided by residues 130–134 (GAGGA) and Leu-219. Tyr-221 is a binding site for shikimate. Residue Gly-242 coordinates NADP(+).

This sequence belongs to the shikimate dehydrogenase family. As to quaternary structure, homodimer.

It catalyses the reaction shikimate + NADP(+) = 3-dehydroshikimate + NADPH + H(+). It participates in metabolic intermediate biosynthesis; chorismate biosynthesis; chorismate from D-erythrose 4-phosphate and phosphoenolpyruvate: step 4/7. Its function is as follows. Involved in the biosynthesis of the chorismate, which leads to the biosynthesis of aromatic amino acids. Catalyzes the reversible NADPH linked reduction of 3-dehydroshikimate (DHSA) to yield shikimate (SA). This chain is Shikimate dehydrogenase (NADP(+)), found in Oleidesulfovibrio alaskensis (strain ATCC BAA-1058 / DSM 17464 / G20) (Desulfovibrio alaskensis).